A 557-amino-acid chain; its full sequence is Formate--tetrahydrofolate ligase (557 aa).

66–73 provides a ligand contact to ATP; it reads TPAGEGKS.

Belongs to the formate--tetrahydrofolate ligase family.

It catalyses the reaction (6S)-5,6,7,8-tetrahydrofolate + formate + ATP = (6R)-10-formyltetrahydrofolate + ADP + phosphate. Its pathway is one-carbon metabolism; tetrahydrofolate interconversion. This is Formate--tetrahydrofolate ligase from Clostridium botulinum (strain 657 / Type Ba4).